A 1339-amino-acid polypeptide reads, in one-letter code: Transcription factor tau subunit sfc3 (1339 aa).

The tract at residues 470–515 (MESNAEVSPDGMTLLPRKRGRPRKSANISVTSSPIRPSKNENNLPS) is disordered. Residues 485–497 (PRKRGRPRKSANI) constitute a DNA-binding region (a.T hook). Residues 495–514 (ANISVTSSPIRPSKNENNLP) show a composition bias toward polar residues. Phosphoserine is present on residues Ser-595 and Ser-596. Residues 791-826 (RRKSMPAEIKRHKESSETKPVDKEEVKKNEKEKDDP) form a disordered region. Basic and acidic residues predominate over residues 798-826 (EIKRHKESSETKPVDKEEVKKNEKEKDDP).

Component of the TFIIIC complex including sfc1, sfc3, sfc4, sfc6 and sfc7. The subunits are organized in two globular domains, tauA and tauB, connected by a proteolysis-sensitive and flexible linker. Interacts with sfc1, sfc4 and sfc6.

Its subcellular location is the nucleus envelope. In terms of biological role, TFIIIC mediates tRNA and 5S RNA gene activation by binding to intragenic promoter elements. Upstream of the transcription start site, TFIIIC assembles the initiation complex TFIIIB-TFIIIC-tDNA, which is sufficient for RNA polymerase III recruitment and function. Part of the tauB domain of TFIIIC that binds boxB DNA promoter sites of tRNA and similar genes. Cooperates with sfc6 in DNA binding. Localizes to chromatin insulator sequence without recruiting RNA polymerase III and plays a role in nuclear organization. This is Transcription factor tau subunit sfc3 from Schizosaccharomyces pombe (strain 972 / ATCC 24843) (Fission yeast).